Reading from the N-terminus, the 983-residue chain is Glycine dehydrogenase (decarboxylating) (983 aa).

The residue at position 726 (K726) is an N6-(pyridoxal phosphate)lysine.

This sequence belongs to the GcvP family. As to quaternary structure, the glycine cleavage system is composed of four proteins: P, T, L and H. Pyridoxal 5'-phosphate is required as a cofactor.

The enzyme catalyses N(6)-[(R)-lipoyl]-L-lysyl-[glycine-cleavage complex H protein] + glycine + H(+) = N(6)-[(R)-S(8)-aminomethyldihydrolipoyl]-L-lysyl-[glycine-cleavage complex H protein] + CO2. The glycine cleavage system catalyzes the degradation of glycine. The P protein binds the alpha-amino group of glycine through its pyridoxal phosphate cofactor; CO(2) is released and the remaining methylamine moiety is then transferred to the lipoamide cofactor of the H protein. The protein is Glycine dehydrogenase (decarboxylating) of Synechocystis sp. (strain ATCC 27184 / PCC 6803 / Kazusa).